A 149-amino-acid chain; its full sequence is Calmodulin (149 aa).

N-acetylalanine is present on alanine 2. 4 EF-hand domains span residues 8 to 43 (EQIA…LGQN), 44 to 79 (PTEA…KMKD), 81 to 116 (DSEE…LGEK), and 117 to 149 (LTDE…MMAK). Aspartate 21, aspartate 23, aspartate 25, serine 27, glutamate 32, aspartate 57, aspartate 59, asparagine 61, threonine 63, glutamate 68, aspartate 94, aspartate 96, asparagine 98, tyrosine 100, and aspartate 105 together coordinate Ca(2+). At lysine 116 the chain carries N6,N6,N6-trimethyllysine. Aspartate 130, aspartate 132, aspartate 134, glutamine 136, and glutamate 141 together coordinate Ca(2+).

The protein belongs to the calmodulin family.

Functionally, calmodulin mediates the control of a large number of enzymes, ion channels and other proteins by Ca(2+). Among the enzymes to be stimulated by the calmodulin-Ca(2+) complex are a number of protein kinases and phosphatases. This is Calmodulin from Mougeotia scalaris (Green alga).